Reading from the N-terminus, the 253-residue chain is Endonuclease NucS (253 aa).

It belongs to the NucS endonuclease family.

It is found in the cytoplasm. Functionally, cleaves both 3' and 5' ssDNA extremities of branched DNA structures. The sequence is that of Endonuclease NucS from Pyrococcus horikoshii (strain ATCC 700860 / DSM 12428 / JCM 9974 / NBRC 100139 / OT-3).